The sequence spans 128 residues: Virion-associated protein (128 aa).

Coiled-coil stretches lie at residues methionine 1–lysine 30 and glutamate 37–glutamate 58. A disordered region spans residues phenylalanine 98 to arginine 128. Residues threonine 119 to arginine 128 are compositionally biased toward pro residues. The segment at proline 122–arginine 128 is capsid binding.

Belongs to the caulimovirus ORF III family. Homotetramer, through coiled-coil domain. Homotrimer when interacts with icosehadral capsid. Interacts with capsid protein, and with Movement protein.

It localises to the virion. Its subcellular location is the host cell junction. The protein resides in the host plasmodesma. Its function is as follows. Plays a role in virus cell-to-cell and plant-to-plant transmission. Interacts with virion icosahedral capsid and movement protein, thereby facilitating virion cell-to-cell transmission through plasmodesmata opened by viral movement protein. Also interacts with aphid transmission factor, attaching the virion to aphid stylet when the animal feeds on an virus infected plant. Aphid saliva may later detach the virion, inducing release of infectious particles when the animal feeds on a new plant. The polypeptide is Virion-associated protein (Carnation etched ring virus (CERV)).